The primary structure comprises 253 residues: tRNA-cytidine(32) 2-sulfurtransferase 2 (253 aa).

A PP-loop motif motif is present at residues 33 to 38; sequence SGGKDS. Positions 108, 111, and 199 each coordinate [4Fe-4S] cluster.

It belongs to the TtcA family. As to quaternary structure, homodimer. It depends on Mg(2+) as a cofactor. The cofactor is [4Fe-4S] cluster.

It is found in the cytoplasm. The enzyme catalyses cytidine(32) in tRNA + S-sulfanyl-L-cysteinyl-[cysteine desulfurase] + AH2 + ATP = 2-thiocytidine(32) in tRNA + L-cysteinyl-[cysteine desulfurase] + A + AMP + diphosphate + H(+). It functions in the pathway tRNA modification. Catalyzes the ATP-dependent 2-thiolation of cytidine in position 32 of tRNA, to form 2-thiocytidine (s(2)C32). The sulfur atoms are provided by the cysteine/cysteine desulfurase (IscS) system. The sequence is that of tRNA-cytidine(32) 2-sulfurtransferase 2 from Francisella tularensis subsp. novicida (strain U112).